Consider the following 765-residue polypeptide: Protein transport protein Sec23A (765 aa).

Zn(2+) contacts are provided by Cys61, Cys66, Cys85, and Cys88. One copy of the Gelsolin-like repeat lies at 632-718 (PEPVLLDSSS…EHGGSQARFL (87 aa)).

Belongs to the SEC23/SEC24 family. SEC23 subfamily. As to quaternary structure, COPII is composed of at least five proteins: the Sec23/24 complex, the Sec13/31 complex and Sar1.

It is found in the cytoplasmic vesicle. The protein resides in the COPII-coated vesicle membrane. The protein localises to the endoplasmic reticulum membrane. It localises to the cytoplasm. Its subcellular location is the cytosol. Component of the coat protein complex II (COPII) which promotes the formation of transport vesicles from the endoplasmic reticulum (ER). The coat has two main functions, the physical deformation of the endoplasmic reticulum membrane into vesicles and the selection of cargo molecules for their transport to the Golgi complex. The polypeptide is Protein transport protein Sec23A (Danio rerio (Zebrafish)).